Here is a 271-residue protein sequence, read N- to C-terminus: Phosphate import ATP-binding protein PstB (271 aa).

The ABC transporter domain maps to Phe-25 to Ile-266. Gly-57–Ser-64 serves as a coordination point for ATP.

This sequence belongs to the ABC transporter superfamily. Phosphate importer (TC 3.A.1.7) family. As to quaternary structure, the complex is composed of two ATP-binding proteins (PstB), two transmembrane proteins (PstC and PstA) and a solute-binding protein (PstS).

It localises to the cell membrane. The catalysed reaction is phosphate(out) + ATP + H2O = ADP + 2 phosphate(in) + H(+). Functionally, part of the ABC transporter complex PstSACB involved in phosphate import. Responsible for energy coupling to the transport system. In Bacillus anthracis, this protein is Phosphate import ATP-binding protein PstB.